A 748-amino-acid polypeptide reads, in one-letter code: 5-methyltetrahydropteroyltriglutamate--homocysteine methyltransferase (748 aa).

Residues 18-21 (REWK) and lysine 112 each bind 5-methyltetrahydropteroyltri-L-glutamate. L-homocysteine is bound by residues 420-422 (IGS) and glutamate 473. Residues 420–422 (IGS) and glutamate 473 contribute to the L-methionine site. Tryptophan 550 is a binding site for 5-methyltetrahydropteroyltri-L-glutamate. Residue aspartate 588 participates in L-homocysteine binding. Aspartate 588 is a binding site for L-methionine. 5-methyltetrahydropteroyltri-L-glutamate is bound at residue glutamate 594. Positions 630, 632, and 654 each coordinate Zn(2+). Histidine 683 acts as the Proton donor in catalysis. Cysteine 715 serves as a coordination point for Zn(2+).

The protein belongs to the vitamin-B12 independent methionine synthase family. Zn(2+) serves as cofactor.

The catalysed reaction is 5-methyltetrahydropteroyltri-L-glutamate + L-homocysteine = tetrahydropteroyltri-L-glutamate + L-methionine. Its pathway is amino-acid biosynthesis; L-methionine biosynthesis via de novo pathway; L-methionine from L-homocysteine (MetE route): step 1/1. Functionally, catalyzes the transfer of a methyl group from 5-methyltetrahydrofolate to homocysteine resulting in methionine formation. The protein is 5-methyltetrahydropteroyltriglutamate--homocysteine methyltransferase of Staphylococcus epidermidis (strain ATCC 35984 / DSM 28319 / BCRC 17069 / CCUG 31568 / BM 3577 / RP62A).